A 200-amino-acid polypeptide reads, in one-letter code: NAD(P)H dehydrogenase (quinone) (200 aa).

In terms of domain architecture, Flavodoxin-like spans 4 to 191; the sequence is VLVLYYSMYG…DIARFQGKHV (188 aa). FMN is bound by residues 10–15 and 79–81; these read SMYGHI and TRF. Tyrosine 12 lines the NAD(+) pocket. Position 99 (tryptophan 99) interacts with substrate. Residues 114 to 120 and histidine 135 each bind FMN; that span reads STGTQHG.

It belongs to the WrbA family. The cofactor is FMN.

It carries out the reaction a quinone + NADH + H(+) = a quinol + NAD(+). It catalyses the reaction a quinone + NADPH + H(+) = a quinol + NADP(+). This chain is NAD(P)H dehydrogenase (quinone), found in Paraburkholderia phytofirmans (strain DSM 17436 / LMG 22146 / PsJN) (Burkholderia phytofirmans).